Here is a 273-residue protein sequence, read N- to C-terminus: Octanoyl-[GcvH]:protein N-octanoyltransferase (273 aa).

The region spanning 40-245 (ATEGAAIRSW…SLMELGATLT (206 aa)) is the BPL/LPL catalytic domain. Catalysis depends on C144, which acts as the Acyl-thioester intermediate.

The protein belongs to the octanoyltransferase LipL family.

The catalysed reaction is N(6)-octanoyl-L-lysyl-[glycine-cleavage complex H protein] + L-lysyl-[lipoyl-carrier protein] = N(6)-octanoyl-L-lysyl-[lipoyl-carrier protein] + L-lysyl-[glycine-cleavage complex H protein]. It participates in protein modification; protein lipoylation via endogenous pathway; protein N(6)-(lipoyl)lysine from octanoyl-[acyl-carrier-protein]. Its function is as follows. Catalyzes the amidotransfer (transamidation) of the octanoyl moiety from octanoyl-GcvH to the lipoyl domain of the E2 subunit of lipoate-dependent enzymes. This chain is Octanoyl-[GcvH]:protein N-octanoyltransferase, found in Exiguobacterium sibiricum (strain DSM 17290 / CCUG 55495 / CIP 109462 / JCM 13490 / 255-15).